Reading from the N-terminus, the 440-residue chain is Glycerophosphocholine cholinephosphodiesterase ENPP6 (440 aa).

The first 22 residues, 1–22 (MAVKLGTLLLALALGLAQPASA), serve as a signal peptide directing secretion. Residues Asp-32, Ser-71, and Asn-92 each coordinate substrate. Asp-32 and Ser-71 together coordinate Zn(2+). Ser-71 functions as the Nucleophile in the catalytic mechanism. Ser-71 bears the Phosphoserine mark. Residues Asn-100 and Asn-118 are each glycosylated (N-linked (GlcNAc...) asparagine). An intrachain disulfide couples Cys-142 to Cys-154. Asp-193 contributes to the substrate binding site. Zn(2+) contacts are provided by Asp-193, His-197, Asp-240, and His-241. Substrate is bound at residue His-241. A glycan (N-linked (GlcNAc...) asparagine) is linked at Asn-341. Position 354 (His-354) interacts with substrate. His-354 contacts Zn(2+). Asn-404 is a glycosylation site (N-linked (GlcNAc...) asparagine). Ser-419 carries GPI-anchor amidated serine lipidation. A propeptide spans 420 to 440 (TAPPVWPSHCALALILLFLLA) (removed in mature form).

This sequence belongs to the nucleotide pyrophosphatase/phosphodiesterase family. As to quaternary structure, homodimer; disulfide-linked. Homotetramer. The cofactor is Zn(2+). As to expression, predominantly expressed in kidney and brain. In the kidney, expressed specifically in the proximal tubules and thin descending limbs of Henle (at protein level).

The protein resides in the cell membrane. The enzyme catalyses sn-glycerol 3-phosphocholine + H2O = phosphocholine + glycerol + H(+). It catalyses the reaction a 1-acyl-sn-glycero-3-phosphocholine + H2O = a 1-acyl-sn-glycerol + phosphocholine + H(+). The catalysed reaction is a 1-O-alkyl-sn-glycero-3-phosphocholine + H2O = a 1-O-alkyl-sn-glycerol + phosphocholine + H(+). It carries out the reaction 1-dodecanoyl-sn-glycero-3-phosphocholine + H2O = 1-dodecanoyl-sn-glycerol + phosphocholine + H(+). The enzyme catalyses 1-hexadecanoyl-sn-glycero-3-phosphocholine + H2O = 1-hexadecanoyl-sn-glycerol + phosphocholine + H(+). It catalyses the reaction 1-(5Z,8Z,11Z,14Z-eicosatetraenoyl)-sn-glycero-3-phosphocholine + H2O = 1-(5Z,8Z,11Z,14Z-eicosatetraenoyl)-sn-glycerol + phosphocholine + H(+). The catalysed reaction is 1-tetradecanoyl-sn-glycero-3-phosphocholine + H2O = 1-tetradecanoyl-sn-glycerol + phosphocholine + H(+). It carries out the reaction sphing-4-enine-phosphocholine + H2O = sphing-4-enine + phosphocholine + H(+). The enzyme catalyses 1-(9Z-octadecenoyl)-sn-glycero-3-phosphocholine + H2O = 1-(9Z-octadecenoyl)-sn-glycerol + phosphocholine + H(+). It catalyses the reaction 1-(9Z,12Z)-octadecadienoyl-sn-glycero-3-phosphocholine + H2O = 1-(9Z,12Z-octadecadienoyl)-sn-glycerol + phosphocholine + H(+). The catalysed reaction is glycero-2-phosphocholine + H2O = phosphocholine + glycerol + H(+). Its activity is regulated as follows. Inhibited by EDTA and EGTA in vitro. In terms of biological role, choline-specific glycerophosphodiesterase that hydrolyzes glycerophosphocholine (GPC) and lysophosphatidylcholine (LPC) and contributes to supplying choline to the cells. Has a preference for LPC with short (12:0 and 14:0) or polyunsaturated (18:2 and 20:4) fatty acids. In vitro, hydrolyzes only choline-containing lysophospholipids, such as sphingosylphosphorylcholine (SPC), platelet-activating factor (PAF) and lysoPAF, but not other lysophospholipids. The chain is Glycerophosphocholine cholinephosphodiesterase ENPP6 from Homo sapiens (Human).